The primary structure comprises 302 residues: Zinc finger protein-like 1 homolog (302 aa).

The B box-type; degenerate zinc-finger motif lies at 1-43 (MGLCKCPKRLVTNQFCFEHRVNVCEHCMVQSHPKCIVQSYLQW). The RING-type; atypical zinc-finger motif lies at 53 to 101 (CNLCGTSLEQGECVRLVCYHVFHWDCLNARQAALPANTAPRGHQCPGCS). The segment at 168-233 (IHSGGERERG…RDDNKYQRRT (66 aa)) is disordered. The segment covering 198–208 (PPSSGDFNASS) has biased composition (polar residues). Serine 217 is modified (phosphoserine). The chain crosses the membrane as a helical span at residues 258-278 (WFLVLSGILAFVMFIYLLAWM).

The protein belongs to the ZFPL1 family.

It localises to the membrane. This is Zinc finger protein-like 1 homolog from Drosophila pseudoobscura pseudoobscura (Fruit fly).